The chain runs to 477 residues: Adenosylhomocysteinase (477 aa).

3 residues coordinate substrate: T63, D142, and E202. An NAD(+)-binding site is contributed by T203 to T205. Residues K232 and D236 each contribute to the substrate site. NAD(+) is bound by residues N237, G266–G271, E289, N324, I345–H347, and N390.

This sequence belongs to the adenosylhomocysteinase family. The cofactor is NAD(+).

Its subcellular location is the cytoplasm. It carries out the reaction S-adenosyl-L-homocysteine + H2O = L-homocysteine + adenosine. It participates in amino-acid biosynthesis; L-homocysteine biosynthesis; L-homocysteine from S-adenosyl-L-homocysteine: step 1/1. May play a key role in the regulation of the intracellular concentration of adenosylhomocysteine. This is Adenosylhomocysteinase from Leptothrix cholodnii (strain ATCC 51168 / LMG 8142 / SP-6) (Leptothrix discophora (strain SP-6)).